The primary structure comprises 471 residues: Tryptophanase (471 aa).

N6-acetyllysine is present on residues Lys5, Lys115, and Lys156. At Lys270 the chain carries N6-(pyridoxal phosphate)lysine. N6-acetyllysine is present on Lys450.

This sequence belongs to the beta-eliminating lyase family. In terms of assembly, homotetramer. Pyridoxal 5'-phosphate serves as cofactor.

It carries out the reaction L-tryptophan + H2O = indole + pyruvate + NH4(+). It participates in amino-acid degradation; L-tryptophan degradation via pyruvate pathway; indole and pyruvate from L-tryptophan: step 1/1. The chain is Tryptophanase from Escherichia coli (strain SMS-3-5 / SECEC).